The primary structure comprises 148 residues: UPF0756 membrane protein NMCC_1816 (148 aa).

Transmembrane regions (helical) follow at residues 13 to 35 (LILLGVVSNNNSITISATILLLM), 50 to 70 (HGLNLGIILLTIGVLSPLVSG), 80 to 100 (FLNFKMISAVFIGIFVAWLAG), and 121 to 141 (VIGVAFMGGIPVGPLIAAGIL).

It belongs to the UPF0756 family.

The protein resides in the cell membrane. The chain is UPF0756 membrane protein NMCC_1816 from Neisseria meningitidis serogroup C (strain 053442).